The following is a 248-amino-acid chain: Probable transcriptional regulatory protein Nham_3525 (248 aa).

The tract at residues 1–21 (MAGHSQFKNIMHRKGRQDAQK) is disordered.

Belongs to the TACO1 family.

The protein resides in the cytoplasm. This chain is Probable transcriptional regulatory protein Nham_3525, found in Nitrobacter hamburgensis (strain DSM 10229 / NCIMB 13809 / X14).